We begin with the raw amino-acid sequence, 372 residues long: MPLPDFHVSEPFTLGIELEMQVVNPPGYDLSQDSSMLIDAVKNEITAGEVKHDITESMLELATDVCRDINQAAGQFSAMQKVVLQAAADHHLEICGGGTHPFQKWQRQEVCDNERYQRTLENFGYLIQQATVFGQHVHVGCASGDDAIYLLHGLSRFVPHFIALSAASPYMQGTDTRFASSRPNIFSAFPDNGPMPWVSNWQQFEALFRCLSYTTMIDSIKDLHWDIRPSPHFGTVEVRVMDTPLTLSHAVNMAGLIQATAHWLLTERPFKHQEKDYLLYKFNRFQACRYGLEGVITDPHTGDRRPLTEDTLRLLEKIAPSAHKMGASSAIEALHRQVVSGLNEAQLMRDFVADGGSLIGLVKKHCEIWAGD.

Belongs to the glutamate--cysteine ligase type 2 family. YbdK subfamily. In terms of assembly, homodimer.

It catalyses the reaction L-cysteine + L-glutamate + ATP = gamma-L-glutamyl-L-cysteine + ADP + phosphate + H(+). ATP-dependent carboxylate-amine ligase which exhibits weak glutamate--cysteine ligase activity. The sequence is that of Putative glutamate--cysteine ligase 2 (ybdK) from Escherichia coli O8 (strain IAI1).